The primary structure comprises 395 residues: RNA ligase 1 (395 aa).

The ATP site is built by Tyr48, Arg65, and Lys83. The N6-AMP-lysine intermediate role is filled by Lys113. Residues Glu173, Lys255, and Lys257 each contribute to the ATP site. Position 285 (Asp285) interacts with Mg(2+).

It depends on Mg(2+) as a cofactor. Mn(2+) is required as a cofactor.

The catalysed reaction is ATP + (ribonucleotide)n-3'-hydroxyl + 5'-phospho-(ribonucleotide)m = (ribonucleotide)n+m + AMP + diphosphate.. Functionally, RNA ligase that ligates single-stranded nucleic acids in an ATP-dependent manner. Catalyzes both inter- and intra-molecular single-stranded DNA (ssDNA) ligation to &gt;50% completion in a matter of hours at an elevated temperature, although favoring intra-molecular ligation on RNA and single-stranded DNA substrates. Is able to catalyze the adenylation reaction of ssDNA 3'-terminal phosphate (ssDNA 3'p) to 3'-adenylated DNA (ssDNA 3'pp5'A). Does not have significant 3'-adenylation activity with a 3'-phosphorylated nicked dsDNA substrate. This Thermus scotoductus protein is RNA ligase 1.